Consider the following 873-residue polypeptide: Leucine--tRNA ligase (873 aa).

Positions 41 to 51 (PYPSGRIHMGH) match the 'HIGH' region motif. The short motif at 645-649 (KMSKS) is the 'KMSKS' region element. Residue K648 participates in ATP binding.

This sequence belongs to the class-I aminoacyl-tRNA synthetase family.

The protein localises to the cytoplasm. The enzyme catalyses tRNA(Leu) + L-leucine + ATP = L-leucyl-tRNA(Leu) + AMP + diphosphate. The sequence is that of Leucine--tRNA ligase from Cereibacter sphaeroides (strain ATCC 17025 / ATH 2.4.3) (Rhodobacter sphaeroides).